Consider the following 473-residue polypeptide: Uronate isomerase (473 aa).

Belongs to the metallo-dependent hydrolases superfamily. Uronate isomerase family.

The catalysed reaction is D-glucuronate = D-fructuronate. It carries out the reaction aldehydo-D-galacturonate = keto-D-tagaturonate. It functions in the pathway carbohydrate metabolism; pentose and glucuronate interconversion. The polypeptide is Uronate isomerase (uxaC) (Bacillus subtilis (strain 168)).